A 275-amino-acid polypeptide reads, in one-letter code: NAD(P)H dehydrogenase [quinone] 1 (275 aa).

FAD contacts are provided by residues H13, 19–20, and Q68; that span reads FN. The residue at position 83 (S83) is a Phosphoserine. 105–108 serves as a coordination point for FAD; the sequence is LQWF. A substrate-binding site is contributed by 127 to 129; sequence AYT. FAD-binding positions include 149–152, Y157, and R202; that span reads TTGG. The interval 226–275 is important for apoenzyme conformational stability; sequence PSSLFDLNFQAGFLLKKEIEDEQKNNKYGLSVGHHLGKPIPTDNQIKARK. K252 is covalently cross-linked (Glycyl lysine isopeptide (Lys-Gly) (interchain with G-Cter in SUMO2)).

This sequence belongs to the NAD(P)H dehydrogenase (quinone) family. In terms of assembly, homodimer. Interacts with PDLIM4 isoform 2; this interaction stabilizes PDLIM4 isoform 2 in response to oxidative stress and protects it from ubiquitin-independent degradation by the core 20S proteasome. Interacts with TP73 (via SAM domain); this interaction is NADH-dependent, stabilizes TP73 in response to oxidative stress and protects it from ubiquitin-independent degradation by the 20S proteasome. Interacts with TP53; this interaction is NADH-dependent, stabilizes TP53 in response to oxidative stress and protects it from ubiquitin-independent degradation by the 20S proteasome. FAD is required as a cofactor.

It is found in the cytoplasm. The protein resides in the cytosol. The enzyme catalyses a quinone + NADH + H(+) = a quinol + NAD(+). The catalysed reaction is a quinone + NADPH + H(+) = a quinol + NADP(+). It carries out the reaction ubiquinone-10 + NADH + H(+) = ubiquinol-10 + NAD(+). It catalyses the reaction menadione + NADH + H(+) = menadiol + NAD(+). In terms of biological role, flavin-containing quinone reductase that catalyzes two-electron reduction of quinones to hydroquinones using either NADH or NADPH as electron donors. In a ping-pong kinetic mechanism, the electrons are sequentially transferred from NAD(P)H to flavin cofactor and then from reduced flavin to the quinone, bypassing the formation of semiquinone and reactive oxygen species. Regulates cellular redox state primarily through quinone detoxification. Reduces components of plasma membrane redox system such as coenzyme Q and vitamin quinones, producing antioxidant hydroquinone forms. In the process may function as superoxide scavenger to prevent hydroquinone oxidation and facilitate excretion. Alternatively, can activate quinones and their derivatives by generating redox reactive hydroquinones with DNA cross-linking antitumor potential. Acts as a gatekeeper of the core 20S proteasome known to degrade proteins with unstructured regions. Upon oxidative stress, interacts with tumor suppressors TP53 and TP73 in a NADH-dependent way and inhibits their ubiquitin-independent degradation by the 20S proteasome. This Cavia porcellus (Guinea pig) protein is NAD(P)H dehydrogenase [quinone] 1 (NQO1).